A 192-amino-acid polypeptide reads, in one-letter code: Density-regulated protein homolog (192 aa).

The interval 62 to 116 is disordered; the sequence is GLEISDEPAADGDEKKKQKRGGKGSKTGAAAAQAAASGGKKKGGGPQKVTLQREP. The span at 87–99 shows a compositional bias: low complexity; sequence KTGAAAAQAAASG. One can recognise an SUI1 domain in the interval 117–176; the sequence is RGKKSVTVIKGLATFDIDLKVASKLFAQKFACGSSVTGADEIVIQGDVKDDLLDLIPEKW.

It belongs to the DENR family.

The protein is Density-regulated protein homolog of Caenorhabditis elegans.